A 107-amino-acid polypeptide reads, in one-letter code: Iron-binding protein IscA (107 aa).

The Fe cation site is built by C35, C99, and C101.

The protein belongs to the HesB/IscA family. Homodimer; may form tetramers and higher multimers. It depends on Fe cation as a cofactor.

Is able to transfer iron-sulfur clusters to apo-ferredoxin. Multiple cycles of [2Fe2S] cluster formation and transfer are observed, suggesting that IscA acts catalytically. Recruits intracellular free iron so as to provide iron for the assembly of transient iron-sulfur cluster in IscU in the presence of IscS, L-cysteine and the thioredoxin reductase system TrxA/TrxB. In Salmonella agona (strain SL483), this protein is Iron-binding protein IscA.